The chain runs to 383 residues: Insecticidal crystal protein Cry35Ab1 (383 aa).

The region spanning 26-138 is the Ricin B-type lectin domain; the sequence is DDSGVSLMNK…NNPNQQWNLT (113 aa).

Belongs to the toxin_10 family. As to quaternary structure, monomer in solution. Copurifies from parasporal inclusion bodies with Cry34Ab1. In terms of processing, proteolytic processing occurs near the C-terminus yielding a stable protein of approximately 40 kDa; this may be the active form of the protein.

Functionally, component of a binary insecticidal toxin active on western corn rootworm (WCR, Diabrotica virgifera subsp. virgifera Le Conte) and probably also on northern corn rootworm (D.barberi). Both proteins are required for maximal toxicity. The larval midgut epithelium is probably the primary target. This protein alone has no activity against southern corn rootworm (Diabrotica undecimpunctata howardi Barber), but it synergizes the toxic effect of its Cry34Ab1 partner. The 2 proteins individually and together form ion channels; channels made in the presence of the 2 proteins have higher conductance. Binds to WCR third instar midgut brush border membrane vesicles; binding improves over 10-fold in the presence of Cry34Ab1. This chain is Insecticidal crystal protein Cry35Ab1, found in Bacillus thuringiensis.